Consider the following 483-residue polypeptide: Beta-glucosidase 4 (483 aa).

A beta-D-glucoside is bound by residues Q29, H131, 176–177 (NE), Y310, and E380. E177 serves as the catalytic Proton donor. The active-site Nucleophile is the E380. N398 carries N-linked (GlcNAc...) asparagine glycosylation. Residues W429, 436–437 (EW), and F445 contribute to the a beta-D-glucoside site.

The protein belongs to the glycosyl hydrolase 1 family.

The catalysed reaction is Hydrolysis of terminal, non-reducing beta-D-glucosyl residues with release of beta-D-glucose.. In Oryza sativa subsp. japonica (Rice), this protein is Beta-glucosidase 4 (BGLU4).